We begin with the raw amino-acid sequence, 120 residues long: Small ribosomal subunit protein eS24 (120 aa).

The tract at residues 101–120 (RDAGTKQKKGGSKGGQGAKG) is disordered.

Belongs to the eukaryotic ribosomal protein eS24 family.

The protein is Small ribosomal subunit protein eS24 of Saccharolobus islandicus (strain M.16.27) (Sulfolobus islandicus).